The sequence spans 312 residues: tRNA-dihydrouridine(16) synthase (312 aa).

Residues 7-9 (PME) and glutamine 68 contribute to the FMN site. Cysteine 98 acts as the Proton donor in catalysis. Residues lysine 139, 200 to 202 (NGE), and 224 to 225 (GR) contribute to the FMN site.

The protein belongs to the Dus family. DusC subfamily. FMN is required as a cofactor.

It catalyses the reaction 5,6-dihydrouridine(16) in tRNA + NADP(+) = uridine(16) in tRNA + NADPH + H(+). The enzyme catalyses 5,6-dihydrouridine(16) in tRNA + NAD(+) = uridine(16) in tRNA + NADH + H(+). Functionally, catalyzes the synthesis of 5,6-dihydrouridine (D), a modified base found in the D-loop of most tRNAs, via the reduction of the C5-C6 double bond in target uridines. Specifically modifies U16 in tRNAs. The polypeptide is tRNA-dihydrouridine(16) synthase (Salmonella typhimurium (strain LT2 / SGSC1412 / ATCC 700720)).